The sequence spans 212 residues: Thymidylate kinase (212 aa).

Position 10 to 17 (10 to 17 (GIDGCGKT)) interacts with ATP.

Belongs to the thymidylate kinase family.

It carries out the reaction dTMP + ATP = dTDP + ADP. Its function is as follows. Phosphorylation of dTMP to form dTDP in both de novo and salvage pathways of dTTP synthesis. The sequence is that of Thymidylate kinase from Prochlorococcus marinus (strain AS9601).